A 273-amino-acid chain; its full sequence is Holocytochrome c-type synthase (273 aa).

A compositionally biased stretch (low complexity) spans 1-18; it reads MGLSASSPAATAQSAAEP. Residues 1–39 form a disordered region; it reads MGLSASSPAATAQSAAEPSKQHQVASPPSECPMHQEKMR. HRM repeat units follow at residues 30 to 35 and 40 to 45; these read ECPMHQ and GCPMHM.

Belongs to the cytochrome c-type heme lyase family.

Its subcellular location is the mitochondrion inner membrane. The catalysed reaction is holo-[cytochrome c] = apo-[cytochrome c] + heme b. Lyase that catalyzes the covalent linking of the heme group to the cytochrome C apoprotein to produce the mature functional cytochrome. In Gallus gallus (Chicken), this protein is Holocytochrome c-type synthase (HCCS).